A 424-amino-acid chain; its full sequence is MAKNIQAIRGMNDYLPGETAIWQRIEGTLKNVLGSYGYSEIRLPIVEQTPLFKRAIGEVTDVVEKEMYTFEDRNGDSLTLRPEGTAGCVRAGIEHGLLYNQEQRLWYIGPMFRHERPQKGRYRQFHQLGAEVFGLQGPDIDAELIMLTARWWRALGIADHVSLELNSIGSLEARANYRDALVAFLEQHQETLDEDCKRRMYTNPLRVLDSKNPDVQALLNDAPALGDYLDDDSREHFAGLCKLLDAAGIAYTVNQRLVRGLDYYNRTVFEWVTNSLGSQGTVCAGGRYDGLVEQLGGRATPAVGFAMGLERLVLLVQAVNPEFIASPVVDIYLVAAGAQTQSAAMTLAERLRDEMPGVKLMTNHGGGNFKKQFARADKWGARIALVLGESEVADGTVVVKDLRSGEQTAVAQDSVAAHLRTLLG.

It belongs to the class-II aminoacyl-tRNA synthetase family. As to quaternary structure, homodimer.

The protein localises to the cytoplasm. The catalysed reaction is tRNA(His) + L-histidine + ATP = L-histidyl-tRNA(His) + AMP + diphosphate + H(+). The sequence is that of Histidine--tRNA ligase from Salmonella agona (strain SL483).